Here is a 490-residue protein sequence, read N- to C-terminus: Cysteine--tRNA ligase (490 aa).

Residue Cys43 coordinates Zn(2+). Positions 45–55 (MTVQSSPHLGH) match the 'HIGH' region motif. The tract at residues 177-204 (VDEMSPAEDSDPRGKRDPRDFALWKGHK) is disordered. Basic and acidic residues predominate over residues 186–204 (SDPRGKRDPRDFALWKGHK). Residues Cys228, His253, and Glu257 each coordinate Zn(2+). A 'KMSKS' region motif is present at residues 284–288 (KMSKS). An ATP-binding site is contributed by Lys287.

It belongs to the class-I aminoacyl-tRNA synthetase family. As to quaternary structure, monomer. Zn(2+) serves as cofactor.

Its subcellular location is the cytoplasm. It catalyses the reaction tRNA(Cys) + L-cysteine + ATP = L-cysteinyl-tRNA(Cys) + AMP + diphosphate. This Cutibacterium acnes (strain DSM 16379 / KPA171202) (Propionibacterium acnes) protein is Cysteine--tRNA ligase.